A 304-amino-acid chain; its full sequence is Non-specific ribonucleoside hydrolase RihC (304 aa).

The active site involves H233.

It belongs to the IUNH family. RihC subfamily.

In terms of biological role, hydrolyzes both purine and pyrimidine ribonucleosides with a broad-substrate specificity. The polypeptide is Non-specific ribonucleoside hydrolase RihC (Shigella boydii serotype 4 (strain Sb227)).